The sequence spans 188 residues: Translation machinery-associated protein 22 (188 aa).

The SUI1 domain occupies 96–167; that stretch reads VTIKRIERNK…EIEEFLLEKY (72 aa).

It belongs to the DENR family. In terms of assembly, interacts with the 40S ribosomal subunit.

The protein resides in the cytoplasm. This chain is Translation machinery-associated protein 22 (TMA22), found in Chaetomium globosum (strain ATCC 6205 / CBS 148.51 / DSM 1962 / NBRC 6347 / NRRL 1970) (Soil fungus).